The sequence spans 403 residues: Phosphoglycerate kinase (403 aa).

Residues 21 to 23, R36, 59 to 62, R119, and R154 each bind substrate; these read DFN and HLGR. Residues K207, G299, E330, and 357 to 360 each bind ATP; that span reads GGDA.

Belongs to the phosphoglycerate kinase family. In terms of assembly, monomer.

It localises to the cytoplasm. It carries out the reaction (2R)-3-phosphoglycerate + ATP = (2R)-3-phospho-glyceroyl phosphate + ADP. Its pathway is carbohydrate degradation; glycolysis; pyruvate from D-glyceraldehyde 3-phosphate: step 2/5. The sequence is that of Phosphoglycerate kinase from Chlamydia trachomatis serovar A (strain ATCC VR-571B / DSM 19440 / HAR-13).